The sequence spans 578 residues: Proline--tRNA ligase (578 aa).

This sequence belongs to the class-II aminoacyl-tRNA synthetase family. ProS type 1 subfamily. In terms of assembly, homodimer.

Its subcellular location is the cytoplasm. The catalysed reaction is tRNA(Pro) + L-proline + ATP = L-prolyl-tRNA(Pro) + AMP + diphosphate. Catalyzes the attachment of proline to tRNA(Pro) in a two-step reaction: proline is first activated by ATP to form Pro-AMP and then transferred to the acceptor end of tRNA(Pro). As ProRS can inadvertently accommodate and process non-cognate amino acids such as alanine and cysteine, to avoid such errors it has two additional distinct editing activities against alanine. One activity is designated as 'pretransfer' editing and involves the tRNA(Pro)-independent hydrolysis of activated Ala-AMP. The other activity is designated 'posttransfer' editing and involves deacylation of mischarged Ala-tRNA(Pro). The misacylated Cys-tRNA(Pro) is not edited by ProRS. This Burkholderia cenocepacia (strain ATCC BAA-245 / DSM 16553 / LMG 16656 / NCTC 13227 / J2315 / CF5610) (Burkholderia cepacia (strain J2315)) protein is Proline--tRNA ligase.